A 353-amino-acid polypeptide reads, in one-letter code: tRNA-specific 2-thiouridylase MnmA 2 (353 aa).

ATP-binding positions include 9 to 16 (AMSGGVDS) and Met35. The active-site Nucleophile is Cys98. A disulfide bond links Cys98 and Cys194. Gly122 provides a ligand contact to ATP. The segment at 144 to 146 (KDQ) is interaction with tRNA. Cys194 acts as the Cysteine persulfide intermediate in catalysis. The interaction with tRNA stretch occupies residues 300–301 (RY).

It belongs to the MnmA/TRMU family.

Its subcellular location is the cytoplasm. It carries out the reaction S-sulfanyl-L-cysteinyl-[protein] + uridine(34) in tRNA + AH2 + ATP = 2-thiouridine(34) in tRNA + L-cysteinyl-[protein] + A + AMP + diphosphate + H(+). In terms of biological role, catalyzes the 2-thiolation of uridine at the wobble position (U34) of tRNA, leading to the formation of s(2)U34. This Clostridium botulinum (strain Langeland / NCTC 10281 / Type F) protein is tRNA-specific 2-thiouridylase MnmA 2.